A 634-amino-acid chain; its full sequence is Coilin (634 aa).

Disordered regions lie at residues 87–135 (VSPA…IAEN), 149–276 (PGPS…KLSQ), and 342–361 (GAKS…DSTL). The segment covering 152–181 (SVQSKLLTNKGTPKAPETQTEVSNMSANIE) has biased composition (polar residues). Basic and acidic residues-rich tracts occupy residues 223 to 234 (TLKEGKMSESKN) and 251 to 272 (KENE…KIPD).

Belongs to the coilin family. In egg chambers expressed in the follicle cells, nurse cells and oocyte. Expressed in the larval brain, salivary glands, fat bodies and in the somatic hub cells at the tip of the testis. Expressed in the spermatogonia and spermatocytes, and in the adult ejaculatory duct (at protein level). Expressed in the adult Malpighian tubules.

It is found in the nucleus. The protein localises to the nucleoplasm. It localises to the cajal body. Its subcellular location is the chromosome. The protein resides in the centromere. It is found in the cytoplasm. The protein localises to the cytoskeleton. It localises to the spindle. Component of nuclear coiled bodies, also known as Cajal bodies or CBs, which are involved in the modification and assembly of nucleoplasmic snRNPs. Required for Cajal body formation. This Drosophila melanogaster (Fruit fly) protein is Coilin.